We begin with the raw amino-acid sequence, 438 residues long: Glycosyl hydrolase family 109 protein (438 aa).

Positions 1–33 (MDKTSRRDLLKLASLAGIGAGLARSQGSSKSMA) form a signal peptide, tat-type signal. NAD(+) contacts are provided by residues 52 to 53 (GR), Asp74, 125 to 128 (WVWH), 145 to 146 (EV), and Asn174. Substrate-binding positions include Tyr203, Arg221, 233–236 (YPTH), and Tyr315. An NAD(+)-binding site is contributed by Tyr233. Residues 408-438 (GPLSEASVANGSAPQKFPDFTRGKWQTRQPV) are disordered.

Belongs to the Gfo/Idh/MocA family. Glycosyl hydrolase 109 subfamily. It depends on NAD(+) as a cofactor. Post-translationally, predicted to be exported by the Tat system. The position of the signal peptide cleavage has not been experimentally proven.

Its function is as follows. Glycosidase. The protein is Glycosyl hydrolase family 109 protein of Solibacter usitatus (strain Ellin6076).